Here is a 255-residue protein sequence, read N- to C-terminus: Phosphate import ATP-binding protein PstB (255 aa).

The 243-residue stretch at 8-250 folds into the ABC transporter domain; that stretch reads IKSSNLNVHY…PGNKMTQDYI (243 aa). 40–47 is an ATP binding site; sequence GPSGCGKS.

The protein belongs to the ABC transporter superfamily. Phosphate importer (TC 3.A.1.7) family. The complex is composed of two ATP-binding proteins (PstB), two transmembrane proteins (PstC and PstA) and a solute-binding protein (PstS).

It localises to the cell inner membrane. It catalyses the reaction phosphate(out) + ATP + H2O = ADP + 2 phosphate(in) + H(+). Its function is as follows. Part of the ABC transporter complex PstSACB involved in phosphate import. Responsible for energy coupling to the transport system. This chain is Phosphate import ATP-binding protein PstB, found in Pelagibacter ubique (strain HTCC1062).